The primary structure comprises 955 residues: Glycine dehydrogenase (decarboxylating) (955 aa).

The residue at position 705 (lysine 705) is an N6-(pyridoxal phosphate)lysine.

Belongs to the GcvP family. In terms of assembly, the glycine cleavage system is composed of four proteins: P, T, L and H. Pyridoxal 5'-phosphate serves as cofactor.

The enzyme catalyses N(6)-[(R)-lipoyl]-L-lysyl-[glycine-cleavage complex H protein] + glycine + H(+) = N(6)-[(R)-S(8)-aminomethyldihydrolipoyl]-L-lysyl-[glycine-cleavage complex H protein] + CO2. The glycine cleavage system catalyzes the degradation of glycine. The P protein binds the alpha-amino group of glycine through its pyridoxal phosphate cofactor; CO(2) is released and the remaining methylamine moiety is then transferred to the lipoamide cofactor of the H protein. The chain is Glycine dehydrogenase (decarboxylating) from Aliivibrio fischeri (strain ATCC 700601 / ES114) (Vibrio fischeri).